The primary structure comprises 734 residues: Photosystem I P700 chlorophyll a apoprotein A2 (734 aa).

Transmembrane regions (helical) follow at residues 46-69 (IFAS…FHVA), 135-158 (LYQG…LHLQ), 175-199 (LNHH…HVAI), 273-291 (IAHH…GHQY), 330-353 (LHFQ…QHMY), 369-395 (AALY…IFFI), 417-439 (AIIS…LYVH), and 517-535 (FLVH…LILV). 2 residues coordinate [4Fe-4S] cluster: cysteine 559 and cysteine 568. A run of 2 helical transmembrane segments spans residues 575–596 (AFYL…YWHW) and 643–665 (LSVW…MFLI). Chlorophyll a is bound by residues histidine 654, methionine 662, and tyrosine 670. Residue tryptophan 671 coordinates phylloquinone. The chain crosses the membrane as a helical span at residues 707 to 727 (LVGLAHFSVGYIFTYAAFLIA).

This sequence belongs to the PsaA/PsaB family. The PsaA/B heterodimer binds the P700 chlorophyll special pair and subsequent electron acceptors. PSI consists of a core antenna complex that captures photons, and an electron transfer chain that converts photonic excitation into a charge separation. The eukaryotic PSI reaction center is composed of at least 11 subunits. P700 is a chlorophyll a/chlorophyll a' dimer, A0 is one or more chlorophyll a, A1 is one or both phylloquinones and FX is a shared 4Fe-4S iron-sulfur center. is required as a cofactor.

It is found in the plastid. The protein resides in the chloroplast thylakoid membrane. It carries out the reaction reduced [plastocyanin] + hnu + oxidized [2Fe-2S]-[ferredoxin] = oxidized [plastocyanin] + reduced [2Fe-2S]-[ferredoxin]. Functionally, psaA and PsaB bind P700, the primary electron donor of photosystem I (PSI), as well as the electron acceptors A0, A1 and FX. PSI is a plastocyanin-ferredoxin oxidoreductase, converting photonic excitation into a charge separation, which transfers an electron from the donor P700 chlorophyll pair to the spectroscopically characterized acceptors A0, A1, FX, FA and FB in turn. Oxidized P700 is reduced on the lumenal side of the thylakoid membrane by plastocyanin. The protein is Photosystem I P700 chlorophyll a apoprotein A2 of Chaetosphaeridium globosum (Charophycean green alga).